A 466-amino-acid chain; its full sequence is Cysteine--tRNA ligase (466 aa).

Residue cysteine 28 participates in Zn(2+) binding. Positions 30-40 (PTVYNYIHIGN) match the 'HIGH' region motif. Zn(2+) contacts are provided by cysteine 208, histidine 233, and glutamate 237. Positions 265–269 (KMSKS) match the 'KMSKS' region motif. ATP is bound at residue lysine 268.

It belongs to the class-I aminoacyl-tRNA synthetase family. Monomer. Requires Zn(2+) as cofactor.

The protein localises to the cytoplasm. The catalysed reaction is tRNA(Cys) + L-cysteine + ATP = L-cysteinyl-tRNA(Cys) + AMP + diphosphate. The polypeptide is Cysteine--tRNA ligase (Staphylococcus aureus (strain bovine RF122 / ET3-1)).